The sequence spans 107 residues: Phosphoribosyl-ATP pyrophosphatase (107 aa).

This sequence belongs to the PRA-PH family.

It is found in the cytoplasm. The catalysed reaction is 1-(5-phospho-beta-D-ribosyl)-ATP + H2O = 1-(5-phospho-beta-D-ribosyl)-5'-AMP + diphosphate + H(+). The protein operates within amino-acid biosynthesis; L-histidine biosynthesis; L-histidine from 5-phospho-alpha-D-ribose 1-diphosphate: step 2/9. This is Phosphoribosyl-ATP pyrophosphatase from Bacillus anthracis (strain A0248).